A 140-amino-acid chain; its full sequence is ATP synthase epsilon chain (140 aa).

Belongs to the ATPase epsilon chain family. As to quaternary structure, F-type ATPases have 2 components, CF(1) - the catalytic core - and CF(0) - the membrane proton channel. CF(1) has five subunits: alpha(3), beta(3), gamma(1), delta(1), epsilon(1). CF(0) has three main subunits: a, b and c.

The protein localises to the cell inner membrane. Its function is as follows. Produces ATP from ADP in the presence of a proton gradient across the membrane. The chain is ATP synthase epsilon chain from Nitrosomonas eutropha (strain DSM 101675 / C91 / Nm57).